A 768-amino-acid chain; its full sequence is Disabled homolog 2 (768 aa).

Residues 1-16 (MSNEVETSTTNGQPDQ) are compositionally biased toward polar residues. A disordered region spans residues 1-36 (MSNEVETSTTNGQPDQQAAPKAPSKKEKKKGSEKTD). Serine 2 is modified (N-acetylserine). Phosphoserine is present on serine 2. The PID domain occupies 45-196 (GDGVKYKAKL…KAEENGSEAL (152 aa)). Phosphotyrosine is present on tyrosine 170. A Phosphoserine modification is found at serine 193. The segment at 230 to 447 (ESRDILLVDL…KPGRGRRTAK (218 aa)) is required for localization to clathrin-coated pits. The tract at residues 285-449 (NFFPTPNPDP…GRGRRTAKSS (165 aa)) is disordered. Short sequence motifs (DPF) lie at residues 293 to 295 (DPF) and 298 to 300 (DPF). Composition is skewed to polar residues over residues 303–317 (PDQS…LTSA), 325–334 (GSLSTPQSKG), and 367–381 (PSSQ…QNGV). Serine 326 and serine 328 each carry phosphoserine; in mitosis. Serine 401 carries the phosphoserine modification. Positions 601–731 (TISTQSFPQP…GVLSGTKSAD (131 aa)) are sufficient for interaction with GRB2. The required for interaction with CSK stretch occupies residues 619-627 (PPQPPPRNG). Residues 649 to 768 (KEVKEMFKDF…HRSPFGNPFA (120 aa)) form a required for interaction with MYO6 region. 2 disordered regions span residues 660 to 682 (LRQP…SSAF) and 709 to 768 (NKIN…NPFA). Residues 663 to 671 (PPLVPSRKG) form a required for interaction with GRB2 and CSK region. Position 673 is a phosphothreonine (threonine 673). Serine 675 is subject to Phosphoserine. The sufficient for interaction with SH3KBP1 SH3 domain stretch occupies residues 708 to 724 (LNKINEPPKPAPRQGVL). A compositionally biased stretch (polar residues) spans 724-755 (LSGTKSADNSLENPFSKGFSSTNPSVVSQPAS). Phosphoserine occurs at positions 729 and 761.

Can interact (via PID domain) with LDLR, APP, APLP1 and APLP2, and weakly with INPP5D (via NPXY motifs); the interaction is impaired by tyrosine phosphorylation of the respective NPXY motifs. Can weakly interact (via PID domain) with LRP1 (via NPXY motif); the interaction is enhanced by tyrosine phosphorylation of the NPXY motif. Interacts with LRP2 (via NPXY motif); the interaction is not affected by tyrosine phosphorylation of the NPXY motif. Interacts with clathrin; in vitro can assemble clathrin triskelia into polyhedral coats. Interacts with AP2A2, ITGB1, ITGB3, ITGB5, PIAS2, DAB2IP, NOSTRIN, FCHO1, DVL3, EPS15, ITSN1 and EPS15L1. Interacts with SH3KBP1 (via SH3 domains). Interacts with GRB2; competes with SOS1 for binding to GRB2 and the interaction is enhanced by EGF and NT-3 stimulation. Interacts with MAP3K7; the interaction is induced by TGF-beta stimulation and may mediate TGF-beta stimulated JNK activation. Interacts with AXIN1 and PPP1CA; the interactions are mutually exclusive. Interacts with the globular tail of MYO6. Interacts (via DPF motifs) with FCHO2; the interaction is direct and required for DAB2-mediated LDLR endocytosis. Interacts with LRP6; the interaction involves LRP6 phosphorylation by CK2 and sequesters LRP6 towards clathrin-mediated endocytosis. Associates with the TGF-beta receptor complex. Interacts with SMAD2 and SMAD3; the interactions are enhanced upon TGF-beta stimulation. Interacts with GRB2; the interaction is enhanced by EGF and NT-3 stimulation. Interacts with SRC; the interaction is enhanced by EGF stimulation. Interacts with GRB2; the interaction is enhanced by EGF and NT-3 stimulation. Interacts (via NPXY motif) with DAB2 (via PID domain). Phosphorylated. Phosphorylation during mitosis is leading to membrane displacement. There is some ambiguity for the mitotic phosphosite Ser-326/328. In terms of tissue distribution, prostate.

It is found in the cytoplasm. It localises to the cytoplasmic vesicle. Its subcellular location is the clathrin-coated vesicle membrane. The protein resides in the membrane. The protein localises to the clathrin-coated pit. Its function is as follows. Adapter protein that functions as a clathrin-associated sorting protein (CLASP) required for clathrin-mediated endocytosis of selected cargo proteins. Can bind and assemble clathrin, and binds simultaneously to phosphatidylinositol 4,5-bisphosphate (PtdIns(4,5)P2) and cargos containing non-phosphorylated NPXY internalization motifs, such as the LDL receptor, to recruit them to clathrin-coated pits. Can function in clathrin-mediated endocytosis independently of the AP-2 complex. Involved in endocytosis of integrin beta-1; this function seems to redundant with the AP-2 complex and seems to require DAB2 binding to endocytosis accessory EH domain-containing proteins such as EPS15, EPS15L1 and ITSN1. Involved in endocytosis of cystic fibrosis transmembrane conductance regulator/CFTR. Involved in endocytosis of megalin/LRP2 lipoprotein receptor during embryonal development. Required for recycling of the TGF-beta receptor. Involved in CFTR trafficking to the late endosome. Involved in several receptor-mediated signaling pathways. Involved in TGF-beta receptor signaling and facilitates phosphorylation of the signal transducer SMAD2. Mediates TFG-beta-stimulated JNK activation. May inhibit the canoniocal Wnt/beta-catenin signaling pathway by stabilizing the beta-catenin destruction complex through a competing association with axin preventing its dephosphorylation through protein phosphatase 1 (PP1). Sequesters LRP6 towards clathrin-mediated endocytosis, leading to inhibition of Wnt/beta-catenin signaling. May activate non-canonical Wnt signaling. In cell surface growth factor/Ras signaling pathways proposed to inhibit ERK activation by interrupting the binding of GRB2 to SOS1 and to inhibit SRC by preventing its activating phosphorylation at 'Tyr-419'. Proposed to be involved in modulation of androgen receptor (AR) signaling mediated by SRC activation; seems to compete with AR for interaction with SRC. Plays a role in the CSF-1 signal transduction pathway. Plays a role in cellular differentiation. Involved in cell positioning and formation of visceral endoderm (VE) during embryogenesis and proposed to be required in the VE to respond to Nodal signaling coming from the epiblast. Required for the epithelial to mesenchymal transition, a process necessary for proper embryonic development. May be involved in myeloid cell differentiation and can induce macrophage adhesion and spreading. May act as a tumor suppressor. This Rattus norvegicus (Rat) protein is Disabled homolog 2 (Dab2).